Here is a 204-residue protein sequence, read N- to C-terminus: 8-oxoguanine DNA glycosylase/AP lyase (204 aa).

Residues lysine 129 and aspartate 147 contribute to the active site.

This sequence belongs to the type-2 OGG1 family.

The catalysed reaction is 2'-deoxyribonucleotide-(2'-deoxyribose 5'-phosphate)-2'-deoxyribonucleotide-DNA = a 3'-end 2'-deoxyribonucleotide-(2,3-dehydro-2,3-deoxyribose 5'-phosphate)-DNA + a 5'-end 5'-phospho-2'-deoxyribonucleoside-DNA + H(+). In terms of biological role, catalyzes the excision of an oxidatively damaged form of guanine (7,8-dihydro-8-oxoguanine = 8-oxoG) from DNA. Also cleaves the DNA backbone at apurinic/apyrimidinic sites (AP sites). In Thermoplasma acidophilum (strain ATCC 25905 / DSM 1728 / JCM 9062 / NBRC 15155 / AMRC-C165), this protein is 8-oxoguanine DNA glycosylase/AP lyase.